The sequence spans 475 residues: Divinyl ether synthase CYP74M1 (475 aa).

C427 contributes to the heme binding site.

Belongs to the cytochrome P450 family. Heme serves as cofactor.

The catalysed reaction is (13S)-hydroperoxy-(9Z,11E)-octadecadienoate = etheroleate + H2O. It catalyses the reaction (13S)-hydroperoxy-(9Z,11E,15Z)-octadecatrienoate = etherolenate + H2O. Its pathway is lipid metabolism; oxylipin biosynthesis. Its function is as follows. Divinyl ether synthase involved in oxylipin biosynthesis. Catalyzes the conversion of (13S)-hydroperoxy-(9Z,11E)-octadecadienoate (13-HPOD) to etheroleate and (13S)-hydroperoxy-(9Z,11E,15Z)-octadecatrienoate (13-HPOT) to etherolenate. Has no activity with the corresponding 9-hydroperoxides (9-HPOD and 9-HPOT). The protein is Divinyl ether synthase CYP74M1 of Selaginella moellendorffii (Spikemoss).